We begin with the raw amino-acid sequence, 542 residues long: Phenylacetone monooxygenase (542 aa).

Residues Ser-27, Glu-46, 54–57 (VWYW), Asp-66, Tyr-72, Val-119, and Gln-152 contribute to the FAD site. 64–66 (RCD) is a binding site for NADP(+). Residues 194–200 (TGSSGIQ), 217–218 (RT), and 336–337 (KR) contribute to the NADP(+) site. Met-446 contacts FAD. Position 501 (Trp-501) interacts with NADP(+).

It belongs to the FAD-binding monooxygenase family. Monomer. It depends on FAD as a cofactor.

It carries out the reaction phenylacetone + NADPH + O2 + H(+) = benzyl acetate + NADP(+) + H2O. Its function is as follows. Catalyzes a Baeyer-Villiger oxidation reaction, i.e. the insertion of an oxygen atom into a carbon-carbon bond adjacent to a carbonyl, which converts ketones to esters. Is most efficient with phenylacetone as substrate, leading to the formation of benzyl acetate. Can also oxidize other aromatic ketones (benzylacetone, alpha-methylphenylacetone and 4-hydroxyacetophenone), some aliphatic ketones (dodecan-2-one and bicyclohept-2-en-6-one) and sulfides (e.g. methyl 4-tolylsulfide). The chain is Phenylacetone monooxygenase (pamO) from Thermobifida fusca (strain YX).